The following is a 658-amino-acid chain: Transcription factor cep-1 (658 aa).

The DNA-binding element occupies 238–428 (EEWLTFEVKK…RDWKNFCEKR (191 aa)). Positions 319, 322, 375, and 379 each coordinate Zn(2+). A disordered region spans residues 450 to 477 (QSSLHSGPSSPEKVTDTSQMFQSTSSSS). Over residues 466 to 476 (TSQMFQSTSSS) the composition is skewed to low complexity. The interval 535-564 (QYGLQRQVKLSEKEYSKFVAFFAKEGENEI) is required for tertiary structure stability of the protein.

It belongs to the p53 family. Homodimer. Interacts (via C-terminus domain) with prmt-5; not methylated by prmt-5. Interacts with cbp-1 (via HAT domain); cep-1 transcriptional activity may be inhibited by interaction with methylated cbp-1. Component of a complex that contains prmt-5 and cbp-1. Interacts with ape-1; the interaction inhibits pro-apoptotic activity of cep-1. Zn(2+) is required as a cofactor. In terms of processing, phosphorylated in response to IR-induced DNA damage which is thought to be mediated by akt-1.

It is found in the nucleus. Its function is as follows. Transcriptional activator that binds the same DNA consensus sequence as p53. Has a role in normal development to ensure proper meiotic chromosome segregation. Promotes apoptosis under conditions of cellular and genotoxic stress in response to DNA damage, hypoxia, or starvation. However, not required for DNA repair in response to UV-C or to regulate cell-cycle progression. Regulates germline apoptosis in response to DNA damage. Required for induction of ced-13 in response to DNA damage. Its pro-apoptotic activity is inhibited when bound to ape-1 in vitro. Regulates germline proliferation by activating phg-1. Regulates DNA damage-induced apoptosis by inducing transcription of the programmed cell death activator egl-1. Negatively regulates lifespan. This is Transcription factor cep-1 from Caenorhabditis briggsae.